The sequence spans 592 residues: Pectinesterase/pectinesterase inhibitor 3 (592 aa).

Residues 1-35 (MAPSMKEIFSKDNFKKNKKLVLLSAAVALLFVAAV) form the signal peptide. The propeptide at 36–238 (AGISAGASKA…KITSNNRKLK (203 aa)) is removed in mature 42 kDa form. Residues 36–273 (AGISAGASKA…WLSAGDRRLL (238 aa)) constitute a propeptide, removed in mature 38 kDa form. Positions 53–212 (PSSHAVLRSS…EHMCSNALAM (160 aa)) are pectinesterase inhibitor 3. 2 N-linked (GlcNAc...) asparagine glycosylation sites follow: N96 and N215. The interval 281 to 578 (DATVAADGSG…YTAGQFIGGG (298 aa)) is pectinesterase 3. Residues T356 and Q386 each coordinate substrate. The Proton donor; for pectinesterase activity role is filled by D409. C423 and C443 form a disulfide bridge. The active-site Nucleophile; for pectinesterase activity is the D430. Positions 454, 498, and 500 each coordinate substrate.

It in the N-terminal section; belongs to the PMEI family. The protein in the C-terminal section; belongs to the pectinesterase family. As to quaternary structure, interacts with BIIDXI and At5g11420. Binds reversibly to PMEI4, PMEI7 and PMEI8 to be inhibited; the stability of the PME3-PMEIs complexes and the inhibition of the pectin methylesterase (PME) activity is pH-dependent, based on protonation status of amino-acids at the complex interface. In terms of tissue distribution, expressed in roots, cotyledons, hypocotyls, seedlings, leaves, stems, flowers, dry seeds and siliques. Accumulates in etiolated hypocotyls (at protein level).

It localises to the secreted. Its subcellular location is the extracellular space. The protein resides in the apoplast. It is found in the cell wall. The catalysed reaction is [(1-&gt;4)-alpha-D-galacturonosyl methyl ester](n) + n H2O = [(1-&gt;4)-alpha-D-galacturonosyl](n) + n methanol + n H(+). Its pathway is glycan metabolism; pectin degradation; 2-dehydro-3-deoxy-D-gluconate from pectin: step 1/5. Its activity is regulated as follows. Regulated negatively by pectinesterase inhibitors (e.g. PMEI3, PMEI4, PMEI7 and PMEI9) in a pH-dependent manner, mainly in slightly acidic conditions (pH 6.0 and 5.0), especially in dark-grown hypocotyls; this processus relies on changes in the protonation of amino acids involved in intermolecular and intramolecular interactions. Functionally, acts in the modification of cell walls via demethylesterification of cell wall pectin. Required for zinc Zn(2+) homeostasis and to monitor Zn(2+) influence on cell wall-controlled growth processes such as root cell elongation. Monitors seed germination and favors root hairs production. Prevents cruciferin seed storage proteins activity, but promotes the expression of genes involved in cell wall organization and remodeling as well as genes involved in lipid and protein metabolism, during post-germinative growth of seedlings. Confers sensitivity to Zn(2+) when overexpressed. Acts as a susceptibility factor required for the initial colonization of the host tissue by virulent pathogens including Botrytis cinerea and Pectobacterium carotovorum, probably by facilitating cell wall pectine degradation by pathogen pectic enzymes after its demethylesterification. This Arabidopsis thaliana (Mouse-ear cress) protein is Pectinesterase/pectinesterase inhibitor 3.